The sequence spans 344 residues: Alkyl hydroperoxide reductase Rv2159c (344 aa).

The segment at Ala-49–Gly-50 is important for interaction with PknI. Cys-84 serves as the catalytic Cysteine sulfenic acid (-SOH) intermediate.

It belongs to the AhpD family. In terms of assembly, interacts with the serine/threonine-protein kinase PknI. The PknI-Rv2159c interaction is mediated through phosphorylation independent physical interaction.

Its activity is regulated as follows. Interaction with PknI increases the peroxidase activity by several folds. In terms of biological role, involved in protection against oxidative stresses. May play a significant role in maintaining the cellular homeostasis during stress and virulence of M.tuberculosis. In vitro, catalyzes the decomposition of cumene hydroperoxide (CHP) to acetophenone. This chain is Alkyl hydroperoxide reductase Rv2159c, found in Mycobacterium tuberculosis (strain ATCC 25618 / H37Rv).